The following is a 301-amino-acid chain: MMNHARGVENRSEGGGIDVVLVTGLSGAGRGTAAKVLEDLGWYVADNLPPQLITRMVDFGLAAGSRITQLAVVMDVRSRGFTGDLDSVRNELATRAITPRVVFMEASDDTLVRRYEQNRRSHPLQGEQTLAEGIAAERRMLAPVRATADLIIDTSTLSVGGLRDSIERAFGGDGGATTSVTVESFGFKYGLPMDADMVMDVRFLPNPHWVDELRPLTGQHPAVRDYVLHRPGAAEFLESYHRLLSLVVDGYRREGKRYMTIAIGCTGGKHRSVAIAEALMGLLRSDQQLSVRALHRDLGRE.

24–31 (GLSGAGRG) serves as a coordination point for ATP. 75–78 (DVRS) lines the GTP pocket.

The protein belongs to the RapZ-like family.

Functionally, displays ATPase and GTPase activities. The polypeptide is Nucleotide-binding protein Mb1456 (Mycobacterium bovis (strain ATCC BAA-935 / AF2122/97)).